The chain runs to 158 residues: Small ribosomal subunit protein uS7 (158 aa).

The protein belongs to the universal ribosomal protein uS7 family. In terms of assembly, part of the 30S ribosomal subunit. Contacts proteins S9 and S11.

Functionally, one of the primary rRNA binding proteins, it binds directly to 16S rRNA where it nucleates assembly of the head domain of the 30S subunit. Is located at the subunit interface close to the decoding center, probably blocks exit of the E-site tRNA. In Phocaeicola vulgatus (strain ATCC 8482 / DSM 1447 / JCM 5826 / CCUG 4940 / NBRC 14291 / NCTC 11154) (Bacteroides vulgatus), this protein is Small ribosomal subunit protein uS7.